A 479-amino-acid chain; its full sequence is Variant surface glycoprotein ILTAT 1.22 (479 aa).

The signal sequence occupies residues 1–12 (MDTAQVFALFYM). N-linked (GlcNAc...) asparagine glycosylation is found at asparagine 120 and asparagine 458. Asparagine 462 carries GPI-anchor amidated asparagine lipidation. A propeptide spans 463 to 479 (NSFAIKTSTLLLAVLLF) (removed in mature form).

It is found in the cell membrane. In terms of biological role, VSG forms a coat on the surface of the parasite. The trypanosome evades the immune response of the host by expressing a series of antigenically distinct VSGs from an estimated 1000 VSG genes. This is Variant surface glycoprotein ILTAT 1.22 from Trypanosoma brucei brucei.